Here is a 100-residue protein sequence, read N- to C-terminus: Urease subunit gamma (100 aa).

This sequence belongs to the urease gamma subunit family. Heterotrimer of UreA (gamma), UreB (beta) and UreC (alpha) subunits. Three heterotrimers associate to form the active enzyme.

The protein localises to the cytoplasm. The catalysed reaction is urea + 2 H2O + H(+) = hydrogencarbonate + 2 NH4(+). It functions in the pathway nitrogen metabolism; urea degradation; CO(2) and NH(3) from urea (urease route): step 1/1. The chain is Urease subunit gamma from Pseudomonas fluorescens (strain Pf0-1).